Consider the following 307-residue polypeptide: MDAIDYKKIFSEIVNELSSEDEKGSVATYIPELANVDPNKLGMHLTTVTNQHFAYGDAEEAFSIQSIAKVWSLTLALKHLGADTWQRVGVEPSGTAFNSLVQLEYEMGIPRNPFINAGAIVVCDILVSCLKNPKEDLLDFIRTSSGIPSIEYCPVIAESEVKTGHRNYALAHMMKGFGNIHNDVDCVLDLYFSLCSIKLTCKQLAQAFLFLAAGGVNPATQQQVITPKRTKRINSIMQMCGFYDEAGEFAFKVGLPGKSGVGGGIVAVHPGKYCIAVFSPRLNASGNSVKAMKVLEALTTKTELSIF.

Substrate contacts are provided by Ser-66, Asn-116, Glu-160, Asn-167, Tyr-191, Tyr-243, and Val-261.

It belongs to the glutaminase family. As to quaternary structure, homotetramer.

It catalyses the reaction L-glutamine + H2O = L-glutamate + NH4(+). The protein is Glutaminase of Saccharophagus degradans (strain 2-40 / ATCC 43961 / DSM 17024).